Reading from the N-terminus, the 275-residue chain is Sororin-B (275 aa).

The segment covering 1–16 (MSERKKRGSSDADSRR) has biased composition (basic and acidic residues). Disordered regions lie at residues 1–42 (MSER…PAPI) and 63–117 (NTGS…EIDV). Polar residues-rich tracts occupy residues 63 to 76 (NTGS…SNVT) and 93 to 112 (NAFS…QSSA). The short motif at 91–93 (KEN) is the KEN box element. Residues 186–188 (FGF) carry the FGF motif motif. The tract at residues 253–275 (VDEWAAIMNAEFDEAEKFDLTVE) is C-terminal Sororin domain.

Belongs to the sororin family. As to quaternary structure, interacts with the APC/C complex. Interacts with the chromatin-bound cohesin complex; the interaction is indirect, occurs after DNA replication and requires acetylation of the cohesin component smc3. Interacts (via the FGF motif) with pds5a and pds5b; the interaction is direct and prevents the interaction of pds5a with wapl. Post-translationally, ubiquitinated by the APC/C complex in G1, leading to its degradation.

It is found in the nucleus. Its subcellular location is the chromosome. It localises to the cytoplasm. Its function is as follows. Regulator of sister chromatid cohesion in mitosis stabilizing cohesin complex association with chromatin. May antagonize the action of wapl which stimulates cohesin dissociation from chromatin. Cohesion ensures that chromosome partitioning is accurate in both meiotic and mitotic cells and plays an important role in DNA repair. Required for efficient DNA double-stranded break repair. In Xenopus laevis (African clawed frog), this protein is Sororin-B (cdca5-b).